We begin with the raw amino-acid sequence, 539 residues long: Chaperonin GroEL (539 aa).

ATP-binding positions include 29–32 (TLGP), 86–90 (DGTTT), Gly412, 475–477 (NAA), and Asp491.

Belongs to the chaperonin (HSP60) family. In terms of assembly, forms a cylinder of 14 subunits composed of two heptameric rings stacked back-to-back. Interacts with the co-chaperonin GroES.

The protein localises to the cytoplasm. It carries out the reaction ATP + H2O + a folded polypeptide = ADP + phosphate + an unfolded polypeptide.. Its function is as follows. Together with its co-chaperonin GroES, plays an essential role in assisting protein folding. The GroEL-GroES system forms a nano-cage that allows encapsulation of the non-native substrate proteins and provides a physical environment optimized to promote and accelerate protein folding. This chain is Chaperonin GroEL, found in Tsukamurella tyrosinosolvens.